Consider the following 252-residue polypeptide: 3-deoxy-manno-octulosonate cytidylyltransferase (252 aa).

The protein belongs to the KdsB family.

The protein localises to the cytoplasm. The catalysed reaction is 3-deoxy-alpha-D-manno-oct-2-ulosonate + CTP = CMP-3-deoxy-beta-D-manno-octulosonate + diphosphate. The protein operates within nucleotide-sugar biosynthesis; CMP-3-deoxy-D-manno-octulosonate biosynthesis; CMP-3-deoxy-D-manno-octulosonate from 3-deoxy-D-manno-octulosonate and CTP: step 1/1. Its pathway is bacterial outer membrane biogenesis; lipopolysaccharide biosynthesis. In terms of biological role, activates KDO (a required 8-carbon sugar) for incorporation into bacterial lipopolysaccharide in Gram-negative bacteria. The protein is 3-deoxy-manno-octulosonate cytidylyltransferase of Nitratidesulfovibrio vulgaris (strain ATCC 29579 / DSM 644 / CCUG 34227 / NCIMB 8303 / VKM B-1760 / Hildenborough) (Desulfovibrio vulgaris).